Reading from the N-terminus, the 324-residue chain is 4-hydroxyphenylpyruvate 3-dimethylallyltransferase (324 aa).

2 residues coordinate substrate: Arg-160 and Glu-281.

This sequence belongs to the aromatic prenyltransferase family. Monomer.

The enzyme catalyses 3-(4-hydroxyphenyl)pyruvate + dimethylallyl diphosphate = 3-dimethylallyl-4-hydroxyphenylpyruvate + diphosphate. It participates in antibiotic biosynthesis. Its function is as follows. Magnesium-independent aromatic prenyltransferase that catalyzes the irreversible transfer of a dimethylallyl group to 4-hydroxyphenylpyruvate to produce the ring A structure in the clorobiocin biosynthesis pathway. Clorobiocin is an aminocoumarin family antibiotic. The protein is 4-hydroxyphenylpyruvate 3-dimethylallyltransferase of Streptomyces roseochromogenus subsp. oscitans.